Reading from the N-terminus, the 2351-residue chain is Coagulation factor VIII (2351 aa).

Residues 1–19 (MQIELSTCFFLCLLRFCFS) form the signal peptide. Plastocyanin-like domains follow at residues 20-198 (ATRR…LLVC) and 206-348 (EKTQ…VDSC). Positions 20–348 (ATRRYYLGAV…MEAYVKVDSC (329 aa)) constitute an F5/8 type A 1 domain. N-linked (GlcNAc...) asparagine glycosylation is present at Asn-60. A disulfide bridge links Cys-172 with Cys-198. Asn-258 carries an N-linked (GlcNAc...) asparagine glycan. A disulfide bridge connects residues Cys-267 and Cys-348. Position 365 is a sulfotyrosine (Tyr-365). Plastocyanin-like domains are found at residues 399–573 (KTWV…LLIC) and 583–730 (NQIM…VSSC). The 332-residue stretch at 399–730 (KTWVHYIAAE…MTALLKVSSC (332 aa)) folds into the F5/8 type A 2 domain. A disulfide bond links Cys-547 and Cys-573. Asn-601 carries N-linked (GlcNAc...) asparagine glycosylation. Residues Cys-649 and Cys-730 are joined by a disulfide bond. A sulfotyrosine mark is found at Tyr-737, Tyr-738, and Tyr-742. The tract at residues 760-1667 (SFSQNSRHPS…NPPVLKRHQR (908 aa)) is b. Asn-776, Asn-803, Asn-847, and Asn-919 each carry an N-linked (GlcNAc...) asparagine glycan. 2 disordered regions span residues 906–928 (STIP…PPSM) and 941–961 (FGKK…SEEN). N-linked (GlcNAc...) asparagine glycans are attached at residues Asn-962, Asn-982, Asn-1020, Asn-1024, Asn-1074, Asn-1085, Asn-1204, Asn-1274, Asn-1278, Asn-1301, Asn-1319, Asn-1431, and Asn-1461. Sulfotyrosine is present on residues Tyr-1683 and Tyr-1699. Plastocyanin-like domains lie at 1713-1877 (KTRH…LLVC) and 1887-2040 (GRQV…SNKC). The F5/8 type A 3 domain occupies 1713–2040 (KTRHYFIAAV…TLFLVYSNKC (328 aa)). The N-linked (GlcNAc...) asparagine glycan is linked to Asn-1829. 4 disulfide bridges follow: Cys-1851–Cys-1877, Cys-1918–Cys-1922, Cys-2040–Cys-2188, and Cys-2193–Cys-2345. 2 F5/8 type C domains span residues 2040-2188 (CQTP…LMGC) and 2193-2345 (CSMP…VLGC). Asn-2137 carries N-linked (GlcNAc...) asparagine glycosylation.

This sequence belongs to the multicopper oxidase family. In terms of assembly, interacts with VWF/vWF. vWF binding is essential for the stabilization of F8 in circulation. In terms of processing, sulfation on Tyr-1699 is essential for binding vWF. Proteolytically cleaved by cathepsin CTSG to produce a partially activated form.

The protein localises to the secreted. Its subcellular location is the extracellular space. Factor VIII, along with calcium and phospholipid, acts as a cofactor for F9/factor IXa when it converts F10/factor X to the activated form, factor Xa. The polypeptide is Coagulation factor VIII (F8) (Homo sapiens (Human)).